Consider the following 641-residue polypeptide: Forkhead box protein P4 (641 aa).

Disordered regions lie at residues 1–43 (MMVE…NGEL) and 239–264 (SFPTTKVSPPTMHPSLSNGQNTRRES). Composition is skewed to polar residues over residues 8–27 (IRSTPTSQNGVGSLPNQSDS) and 239–259 (SFPTTKVSPPTMHPSLSNGQN). The C2H2-type zinc finger occupies 278 to 303 (GECRWPGCEALCEDMGQFIKHLNTEH). Residues 320-341 (VQQLEIQLAKESERLQAMMTHL) are leucine-zipper. A ctbp1-binding region spans residues 354–358 (PLNLV). A DNA-binding region (fork-head) is located at residues 436–526 (RPPFTYASLI…PPKMTGSPTL (91 aa)). The disordered stretch occupies residues 563–641 (SSGSVLHGGH…ESESPMEDLP (79 aa)). Polar residues predominate over residues 576-599 (TSTGEPGNSNGSSPRLSPQYSQSI). Positions 600–611 (HVKEEPAEDDVR) are enriched in basic and acidic residues. Residues 629–641 (RDLESESPMEDLP) are compositionally biased toward acidic residues.

Dimerization is required for DNA-binding. In terms of tissue distribution, first expressed in the anterior neural field of stage 15 embryos. At stage 18, localized in three domains of the brain (rostral forebrain, midbrain and hindbrain) and in the eye anlage. Cerebral and retinal expression persists at later stages with additional expression in the branchial arches, at the base of the hatching gland, and in the pancreas.

Its subcellular location is the nucleus. In terms of biological role, transcriptional repressor. This is Forkhead box protein P4 from Xenopus laevis (African clawed frog).